The sequence spans 542 residues: Glutamyl-tRNA reductase 2, chloroplastic (542 aa).

Substrate is bound by residues 142-145, Ser202, 207-209, and Gln213; these read TCNR and EGQ. Cys143 functions as the Nucleophile in the catalytic mechanism. 284 to 289 lines the NADP(+) pocket; that stretch reads GAGKMG.

The protein belongs to the glutamyl-tRNA reductase family. In terms of tissue distribution, found in all tissues examined.

Its subcellular location is the plastid. The protein localises to the chloroplast. The catalysed reaction is (S)-4-amino-5-oxopentanoate + tRNA(Glu) + NADP(+) = L-glutamyl-tRNA(Glu) + NADPH + H(+). It functions in the pathway porphyrin-containing compound metabolism; protoporphyrin-IX biosynthesis; 5-aminolevulinate from L-glutamyl-tRNA(Glu): step 1/2. Its function is as follows. Catalyzes the NADPH-dependent reduction of glutamyl-tRNA(Glu) to glutamate 1-semialdehyde (GSA). The sequence is that of Glutamyl-tRNA reductase 2, chloroplastic (HEMA2) from Cucumis sativus (Cucumber).